A 221-amino-acid polypeptide reads, in one-letter code: Cytidylate kinase (221 aa).

Residue 11 to 19 (GPSGVGKST) coordinates ATP.

The protein belongs to the cytidylate kinase family. Type 1 subfamily.

The protein localises to the cytoplasm. It carries out the reaction CMP + ATP = CDP + ADP. The catalysed reaction is dCMP + ATP = dCDP + ADP. The sequence is that of Cytidylate kinase from Mycoplasmopsis pulmonis (strain UAB CTIP) (Mycoplasma pulmonis).